The sequence spans 24 residues: RKGWFKAMKSIAKFIAKEKLKEHL.

This sequence belongs to the cationic peptide 04 (cupiennin) family. 05 subfamily. Monomer in solution. Small size oligomers on the lipid membranes.

Its subcellular location is the secreted. It is found in the target cell membrane. Antimicrobial peptide that inhibits many reference strains of bacteria and fungi. Is potent against Candida species and multidrug-resistant Acinetobacter baumannii (MDRAB). Is probably localized in the cytoplasm after being transported through the cell wall and membrane. Is able to interact with cell membranes and enter into cell plasma to activate the mitochondrial death pathway to sensitize cancer cells for apoptosis, as well as up-regulates p27 to inhibit cell proliferation. It shows very low effect on normal cells, such as erythrocytes, Hek293t cells. It also potently inhibits tumor cell growth in vitro, and suppresses various tumor growth in vivo when tested in human cancer xenograft models. It interacts with the cell membrane and is then internalized into the cytoplasm of cancer cells to initiate the programmable cell death. In addition, this peptide has the therapeutic effects of anti-hypertension by endothelium-dependent vasodilatation via the NO/sGC/cGMP signaling pathway. In vivo, this peptide also shows a significant ability to inhibit T.gondii invasion and proliferation, making it a potential alternative agent for the treatment of toxoplasmosis. The chain is Lycosin-I from Lycosa singoriensis (Wolf spider).